Consider the following 377-residue polypeptide: Succinyl-diaminopimelate desuccinylase (377 aa).

A Zn(2+)-binding site is contributed by histidine 67. Residue aspartate 69 is part of the active site. Residue aspartate 100 coordinates Zn(2+). Glutamate 134 functions as the Proton acceptor in the catalytic mechanism. The Zn(2+) site is built by glutamate 135, glutamate 163, and histidine 349.

As to quaternary structure, homodimer. Zn(2+) serves as cofactor.

It carries out the reaction N-succinyl-(2S,6S)-2,6-diaminopimelate + H2O = (2S,6S)-2,6-diaminopimelate + succinate. It functions in the pathway amino-acid biosynthesis; L-lysine biosynthesis via DAP pathway; LL-2,6-diaminopimelate from (S)-tetrahydrodipicolinate (succinylase route): step 3/3. Competitively inhibited by L,L-DAP, D,L-DAP, 2-carboxyethylphosphonic acid (CEPA) and 5-mercaptopentanoic acid (MSPA). Succinate is a poor inhibitor. In terms of biological role, catalyzes the hydrolysis of N-succinyl-L,L-diaminopimelic acid (SDAP), forming succinate and LL-2,6-diaminopimelate (DAP), an intermediate involved in the bacterial biosynthesis of lysine and meso-diaminopimelic acid, an essential component of bacterial cell walls. It can only hydrolyze L,L-N-succinyl-diaminopimelic acid (L,L-SDAP) and is inactive toward D,L-, L,D-, and D,D-SDAP. The polypeptide is Succinyl-diaminopimelate desuccinylase (dapE) (Haemophilus influenzae (strain ATCC 51907 / DSM 11121 / KW20 / Rd)).